Here is a 55-residue protein sequence, read N- to C-terminus: Large ribosomal subunit protein bL33 (55 aa).

Belongs to the bacterial ribosomal protein bL33 family.

In Pectobacterium carotovorum subsp. carotovorum (strain PC1), this protein is Large ribosomal subunit protein bL33.